The chain runs to 753 residues: Transcription factor SOX-30 (753 aa).

Disordered regions lie at residues 1-45 (MERA…TLSA) and 137-161 (AKKQ…TGPR). Positions 7 to 23 (EPPPQPRPLRPAPPPLP) are enriched in pro residues. The segment at residues 337–405 (VKRPMNAFMV…KHREEFPGWV (69 aa)) is a DNA-binding region (HMG box). 2 disordered regions span residues 514–575 (TGPS…SPCP) and 726–753 (PTST…LRDL). 2 stretches are compositionally biased toward polar residues: residues 531–563 (TVKQ…STIQ) and 726–739 (PTST…VNVT).

In terms of assembly, interacts with CTNNB1, competitively inhibiting CTNNB1-TCF7L2/TCF4 interaction.

It localises to the nucleus. The protein resides in the cytoplasm. Its function is as follows. Acts both as a transcriptional activator and a repressor. Binds to the DNA sequence 5'-ACAAT-3' and shows a preference for guanine residues surrounding this core motif. Binds to its own promoter and activates its own transcription. Required to activate the expression of postmeiotic genes involved in spermiogenesis. Binds to the promoter region of CTNNB1 and represses its transcription which leads to inhibition of Wnt signaling. Also inhibits Wnt signaling by binding to the CTNNB1 protein, preventing interaction of CTNNB1 with TCF7L2/TCF4. The polypeptide is Transcription factor SOX-30 (SOX30) (Homo sapiens (Human)).